We begin with the raw amino-acid sequence, 84 residues long: Small ribosomal subunit protein uS15 (84 aa).

Belongs to the universal ribosomal protein uS15 family. As to quaternary structure, part of the 30S ribosomal subunit. Forms a bridge to the 50S subunit in the 70S ribosome, contacting the 23S rRNA.

In terms of biological role, one of the primary rRNA binding proteins, it binds directly to 16S rRNA where it helps nucleate assembly of the platform of the 30S subunit by binding and bridging several RNA helices of the 16S rRNA. Its function is as follows. Forms an intersubunit bridge (bridge B4) with the 23S rRNA of the 50S subunit in the ribosome. The sequence is that of Small ribosomal subunit protein uS15 from Fervidobacterium nodosum (strain ATCC 35602 / DSM 5306 / Rt17-B1).